The chain runs to 363 residues: Aminopyrrolnitrin oxygenase PrnD (363 aa).

One can recognise a Rieske domain in the interval 29–137 (WYVAMRSNEL…TAERYGYVWV (109 aa)). Residues Cys69, His71, Cys88, and His91 each coordinate [2Fe-2S] cluster.

Homodimer. It depends on [2Fe-2S] cluster as a cofactor. Fe cation serves as cofactor. Requires FMN as cofactor.

The enzyme catalyses aminopyrrolnitrin + NADPH + 2 O2 + H(+) = pyrrolnitrin + NADP(+) + 2 H2O. It functions in the pathway antibiotic biosynthesis. Involved in the biosynthesis of the antifungal antibiotic pyrrolnitrin (PRN). Catalyzes the oxidation of the amino group of aminopyrrolnitrin (APRN) to a nitro group to form PRN. It has high substrate specificity toward physiological substrate aminopyrrolnitrin, p-aminobenzylamine (pABA), p-aminobenzyl alcohol, and p-aminophenyl alanine. This chain is Aminopyrrolnitrin oxygenase PrnD (prnD), found in Pseudomonas fluorescens.